The sequence spans 232 residues: DnaJ homolog subfamily B member 8 (232 aa).

The region spanning 3–69 (NYYEVLGVQA…KKRSLYDRAG (67 aa)) is the J domain.

Interacts with histone deacetylases HDAC4, HDAC6, and SIRT2, HDAC activity is required for antiaggregation.

In terms of biological role, efficient suppressor of aggregation and toxicity of disease-associated polyglutamine proteins. In Homo sapiens (Human), this protein is DnaJ homolog subfamily B member 8 (DNAJB8).